Consider the following 600-residue polypeptide: Pescadillo homolog (600 aa).

In terms of domain architecture, BRCT spans 351-450 (PTSTLLSKFI…ELLPVSQYAP (100 aa)). A disordered region spans residues 454–600 (LPPHLSPWGD…AELGKLNKKN (147 aa)). Residues 478 to 509 (QGEEEEEEEEEIEGDEIEEDVEEEDEEEDEDL) show a composition bias toward acidic residues. The stretch at 478–600 (QGEEEEEEEE…AELGKLNKKN (123 aa)) forms a coiled coil. A compositionally biased stretch (basic residues) spans 530-539 (KDKKSSKGKK). Basic and acidic residues-rich tracts occupy residues 569–580 (IDKKEARQDDLT) and 588–600 (KTKA…NKKN).

It belongs to the pescadillo family. In terms of assembly, component of the NOP7 complex, composed of ERB1, NOP7 and YTM1. The complex is held together by ERB1, which interacts with NOP7 via its N-terminal domain and with YTM1 via a high-affinity interaction between the seven-bladed beta-propeller domains of the 2 proteins. The NOP7 complex associates with the 66S pre-ribosome.

The protein localises to the nucleus. It is found in the nucleolus. It localises to the nucleoplasm. In terms of biological role, component of the NOP7 complex, which is required for maturation of the 25S and 5.8S ribosomal RNAs and formation of the 60S ribosome. This Debaryomyces hansenii (strain ATCC 36239 / CBS 767 / BCRC 21394 / JCM 1990 / NBRC 0083 / IGC 2968) (Yeast) protein is Pescadillo homolog.